The sequence spans 119 residues: NAD(P)H-quinone oxidoreductase subunit M (119 aa).

Belongs to the complex I NdhM subunit family. In terms of assembly, NDH-1 can be composed of about 15 different subunits; different subcomplexes with different compositions have been identified which probably have different functions.

Its subcellular location is the cellular thylakoid membrane. It catalyses the reaction a plastoquinone + NADH + (n+1) H(+)(in) = a plastoquinol + NAD(+) + n H(+)(out). The catalysed reaction is a plastoquinone + NADPH + (n+1) H(+)(in) = a plastoquinol + NADP(+) + n H(+)(out). NDH-1 shuttles electrons from an unknown electron donor, via FMN and iron-sulfur (Fe-S) centers, to quinones in the respiratory and/or the photosynthetic chain. The immediate electron acceptor for the enzyme in this species is believed to be plastoquinone. Couples the redox reaction to proton translocation, and thus conserves the redox energy in a proton gradient. Cyanobacterial NDH-1 also plays a role in inorganic carbon-concentration. The polypeptide is NAD(P)H-quinone oxidoreductase subunit M (Picosynechococcus sp. (strain ATCC 27264 / PCC 7002 / PR-6) (Agmenellum quadruplicatum)).